The primary structure comprises 92 residues: UPF0298 protein BH2594 (92 aa).

The protein belongs to the UPF0298 family.

It is found in the cytoplasm. This is UPF0298 protein BH2594 from Halalkalibacterium halodurans (strain ATCC BAA-125 / DSM 18197 / FERM 7344 / JCM 9153 / C-125) (Bacillus halodurans).